A 168-amino-acid chain; its full sequence is Photosystem I assembly protein Ycf3 (168 aa).

TPR repeat units lie at residues Ala-35–Pro-68, Ser-72–Leu-105, and Gly-120–Asn-153.

The protein belongs to the Ycf3 family.

The protein resides in the plastid. Its subcellular location is the chloroplast thylakoid membrane. Functionally, essential for the assembly of the photosystem I (PSI) complex. May act as a chaperone-like factor to guide the assembly of the PSI subunits. The sequence is that of Photosystem I assembly protein Ycf3 from Daucus carota (Wild carrot).